Here is a 188-residue protein sequence, read N- to C-terminus: FMN-dependent NADPH-azoreductase (188 aa).

The protein belongs to the azoreductase type 2 family. Homotetramer. FMN is required as a cofactor.

Its function is as follows. Catalyzes the reductive cleavage of azo bond in aromatic azo compounds to the corresponding amines. Requires NADPH, but not NADH, as an electron donor for its activity. In Staphylococcus aureus (strain MSSA476), this protein is FMN-dependent NADPH-azoreductase (azo1).